Reading from the N-terminus, the 172-residue chain is S-ribosylhomocysteine lyase (172 aa).

3 residues coordinate Fe cation: histidine 54, histidine 58, and cysteine 128.

This sequence belongs to the LuxS family. As to quaternary structure, homodimer. The cofactor is Fe cation.

The catalysed reaction is S-(5-deoxy-D-ribos-5-yl)-L-homocysteine = (S)-4,5-dihydroxypentane-2,3-dione + L-homocysteine. In terms of biological role, involved in the synthesis of autoinducer 2 (AI-2) which is secreted by bacteria and is used to communicate both the cell density and the metabolic potential of the environment. The regulation of gene expression in response to changes in cell density is called quorum sensing. Catalyzes the transformation of S-ribosylhomocysteine (RHC) to homocysteine (HC) and 4,5-dihydroxy-2,3-pentadione (DPD). This Vibrio vulnificus (strain CMCP6) protein is S-ribosylhomocysteine lyase.